A 589-amino-acid chain; its full sequence is Ubiquilin-1 (589 aa).

The segment covering 1–11 has biased composition (gly residues); sequence MAESGESGGPP. 2 disordered regions span residues 1–35 and 110–145; these read MAES…AEPK and NRPQ…ATSN. Ala-2 is modified (N-acetylalanine). Positions 12 to 35 are enriched in low complexity; that stretch reads GSQDSAAGAEGAGAPAAAASAEPK. A Ubiquitin-like domain is found at 37 to 111; sequence MKVTVKTPKE…VHLVIKTQNR (75 aa). Residues 110-124 are compositionally biased toward polar residues; the sequence is NRPQDHSAQQTNTAG. Residues 125–145 show a composition bias toward low complexity; that stretch reads SNVTTSSTPNSNSTSGSATSN. The segment at 178-428 is interaction with UBXN4; that stretch reads QLLSNPEMMV…LNNPLFAGNP (251 aa). STI1 domains lie at 182–210 and 212–251; these read NPEM…QLIM and NPQM…MQEM. The segment at 295–371 is disordered; that stretch reads PFASLVSNTS…NLVPGVGASM (77 aa). A compositionally biased stretch (polar residues) spans 299–313; that stretch reads LVSNTSSGEGSQPSR. Positions 327-360 are enriched in low complexity; that stretch reads QTSQSSSASSGTASTVGGTTGSTASGTSGQSTTA. STI1 domains lie at 387–434 and 438–470; these read NPQL…QEQM and LPTF…QQGL. The tract at residues 488-520 is disordered; that stretch reads LGALGSTGGSSGTNGSNATPSENTSPTAGTTEP. A compositionally biased stretch (gly residues) spans 489–499; sequence GALGSTGGSSG. Polar residues predominate over residues 509–520; the sequence is ENTSPTAGTTEP. Residues 546–586 form the UBA domain; the sequence is RFQQQLEQLSAMGFLNREANLQALIATGGDINAAIERLLGS.

In terms of assembly, monomer and homodimer. Heterodimer with UBQLN2. Binds CD47, NBL1, GABRA1, GABRA2, GABRA3, GABRA6, GABRB1, GABRB2 and GABRB3. Binds UBE3A, BTRC, P4HB and MTOR. Interacts with the proteasome 19S subunit. Interacts (via ubiquitin-like domain) with TREX1; the interaction is direct and may control TREX1 subcellular location. Forms a complex with UBXN4 and VCP. Interacts (via UBA domain) with UBQLN4 (via ubiquitin-like domain). Found in a complex with UBQLN2 and MAP1LC3A/B/C. The monomeric form interacts with PSEN2. The monomeric form interacts with PSEN1. Interacts with ORAI1. Interacts (via UBA domain) with TICAM1. Interacts with EPS15. Interacts (via UBA domain) with UBA52 and (via ubiquitin-like domain) with PSMD3 and PSMD4. Interacts with HERPUD1. Interacts with MAP1LC3A/B/C in the presence of UBQLN4. Interacts (via ubiquitin-like domain) with EPS15 (via UIM domains) and both the ubiquitinated and non-ubiquitinated forms can interact with EPS15. Interacts (via ubiquitin-like domain) with EPS15L1, HGS (via UIM domain) and STAM2 (via UIM domain). Interacts with BCL2L10/BCL-B; in the cytoplasm. Monomeric form interacts with PSEN1. Degraded during both macroautophagy and during chaperone-mediated autophagy (CMA). In terms of processing, phosphorylated. Post-translationally, ubiquitinated. Brain (at protein level). Ubiquitous. Highly expressed throughout the brain; detected in neurons and in neuropathological lesions, such as neurofibrillary tangles and Lewy bodies. Highly expressed in heart, placenta, pancreas, lung, liver, skeletal muscle and kidney.

It is found in the cytoplasm. The protein localises to the nucleus. The protein resides in the endoplasmic reticulum. Its subcellular location is the cytoplasmic vesicle. It localises to the autophagosome. It is found in the cell membrane. Functionally, plays an important role in the regulation of different protein degradation mechanisms and pathways including ubiquitin-proteasome system (UPS), autophagy and endoplasmic reticulum-associated protein degradation (ERAD) pathway. Mediates the proteasomal targeting of misfolded or accumulated proteins for degradation by binding (via UBA domain) to their polyubiquitin chains and by interacting (via ubiquitin-like domain) with the subunits of the proteasome. Plays a role in the ERAD pathway via its interaction with ER-localized proteins UBXN4, VCP and HERPUD1 and may form a link between the polyubiquitinated ERAD substrates and the proteasome. Involved in the regulation of macroautophagy and autophagosome formation; required for maturation of autophagy-related protein LC3 from the cytosolic form LC3-I to the membrane-bound form LC3-II and may assist in the maturation of autophagosomes to autolysosomes by mediating autophagosome-lysosome fusion. Negatively regulates the TICAM1/TRIF-dependent toll-like receptor signaling pathway by decreasing the abundance of TICAM1 via the autophagic pathway. Promotes the ubiquitination and lysosomal degradation of ORAI1, consequently down-regulating the ORAI1-mediated Ca2+ mobilization. Suppresses the maturation and proteasomal degradation of amyloid beta A4 protein (A4) by stimulating the lysine 63 (K63)-linked polyubiquitination. Delays the maturation of A4 by sequestering it in the Golgi apparatus and preventing its transport to the cell surface for subsequent processing. Ubiquitinates BCL2L10 and thereby stabilizes protein abundance. Its function is as follows. Plays a role in unfolded protein response (UPR) by attenuating the induction of UPR-inducible genes, DDTI3/CHOP, HSPA5 and PDIA2 during ER stress. Plays a key role in the regulation of the levels of PSEN1 by targeting its accumulation to aggresomes which may then be removed from cells by autophagocytosis. In terms of biological role, plays a role in unfolded protein response (UPR) by attenuating the induction of UPR-inducible genes, DDTI3/CHOP, HSPA5 and PDIA2 during ER stress. This is Ubiquilin-1 (UBQLN1) from Homo sapiens (Human).